Reading from the N-terminus, the 660-residue chain is Tripartite terminase subunit 3 (660 aa).

The Walker A motif signature appears at 203–210 (VPRRHGKT). Residues 294 to 299 (ILLVDE) carry the Walker B motif motif. Glu-299 acts as the For ATPase activity in catalysis. Residues Asp-452, Glu-523, and Asp-637 each act as for nuclease activity in the active site.

It belongs to the herpesviridae TRM3 protein family. Interacts with the terminase subunits TRM1 and TRM2. Interacts with portal protein.

It localises to the host nucleus. Its function is as follows. Component of the molecular motor that translocates viral genomic DNA in empty capsid during DNA packaging. Forms a tripartite terminase complex together with TRM1 and TRM2 in the host cytoplasm. Once the complex reaches the host nucleus, it interacts with the capsid portal vertex. This portal forms a ring in which genomic DNA is translocated into the capsid. TRM3 carries an RNase H-like nuclease activity that plays an important role for the cleavage of concatemeric viral DNA into unit length genomes. This Elephas maximus (Indian elephant) protein is Tripartite terminase subunit 3.